The following is a 394-amino-acid chain: Actin-related protein 2-A (394 aa).

Residues 160 to 162 (GDG), 214 to 218 (RMMKE), and 305 to 310 (GGSTMY) contribute to the ATP site.

Belongs to the actin family. ARP2 subfamily. In terms of assembly, component of the Arp2/3 complex composed of actr2/arp2, actr3/arp3, arpc1b, arpc2, arpc3, arpc4 and arpc5.

The protein localises to the cytoplasm. It localises to the cytoskeleton. The protein resides in the cell projection. Its subcellular location is the nucleus. Functionally, ATP-binding component of the Arp2/3 complex, a multiprotein complex that mediates actin polymerization upon stimulation by nucleation-promoting factor (NPF). The Arp2/3 complex mediates the formation of branched actin networks in the cytoplasm, providing the force for cell motility. Seems to contact the pointed end of the daughter actin filament. In addition to its role in the cytoplasmic cytoskeleton, the Arp2/3 complex also promotes actin polymerization in the nucleus, thereby regulating gene transcription and repair of damaged DNA. The Arp2/3 complex promotes homologous recombination (HR) repair in response to DNA damage by promoting nuclear actin polymerization, leading to drive motility of double-strand breaks (DSBs). In Danio rerio (Zebrafish), this protein is Actin-related protein 2-A (actr2a).